The primary structure comprises 858 residues: Transcription factor pytR (858 aa).

The disordered stretch occupies residues 1–35 (MAHFSRVASDPSLAPQPSAPSGLDSSTTSSSSTGL). The segment at residues 39–65 (CTFCRARKIRCSSGPICSACRERNINC) is a DNA-binding region (zn(2)-C6 fungal-type). The disordered stretch occupies residues 72–99 (RKGRPRRRGTNTSNAQAKKGDQENPTLG).

It localises to the nucleus. Its function is as follows. Transcription factor that regulates the expression of the gene cluster that mediates the biosynthesis of Pyranterreones, a family of antioxidative compounds. In Aspergillus terreus (strain NIH 2624 / FGSC A1156), this protein is Transcription factor pytR.